The chain runs to 735 residues: 1,4-alpha-glucan branching enzyme GlgB 1 (735 aa).

The Nucleophile role is filled by Asp418. Glu471 (proton donor) is an active-site residue.

The protein belongs to the glycosyl hydrolase 13 family. GlgB subfamily. In terms of assembly, monomer.

It carries out the reaction Transfers a segment of a (1-&gt;4)-alpha-D-glucan chain to a primary hydroxy group in a similar glucan chain.. It functions in the pathway glycan biosynthesis; glycogen biosynthesis. Its function is as follows. Catalyzes the formation of the alpha-1,6-glucosidic linkages in glycogen by scission of a 1,4-alpha-linked oligosaccharide from growing alpha-1,4-glucan chains and the subsequent attachment of the oligosaccharide to the alpha-1,6 position. The sequence is that of 1,4-alpha-glucan branching enzyme GlgB 1 from Rhizobium johnstonii (strain DSM 114642 / LMG 32736 / 3841) (Rhizobium leguminosarum bv. viciae).